Here is a 507-residue protein sequence, read N- to C-terminus: Mandelamide hydrolase (507 aa).

Active-site charge relay system residues include K100 and S180. S204 acts as the Acyl-ester intermediate in catalysis.

As to quaternary structure, monomer.

It carries out the reaction (R)-mandelamide + H2O = (R)-mandelate + NH4(+). Inhibited by 3,4-dichloroisocoumarin and PMSF. In terms of biological role, hydrolyzes both the R- and the S-enantiomers of mandelamide, and phenylacetamide. Has lower activity on 3-phenylpropionaide and lactamide. Does not hydrolyze benzamide. Hydrolyzes esters and amides with little steric bulk. Preferentially hydrolyzes aromatic substrates. This chain is Mandelamide hydrolase, found in Pseudomonas putida (Arthrobacter siderocapsulatus).